A 179-amino-acid polypeptide reads, in one-letter code: Phospholipase A2 (179 aa).

The first 21 residues, 1–21 (MHALRSSVLALWLCLHVSVRA), serve as a signal peptide directing secretion. Positions 22 to 39 (WMTYRSANGLDEYEPEDR) are excised as a propeptide. Positions 47, 49, and 51 each coordinate Ca(2+). 5 disulfides stabilise this stretch: Cys48–Cys70, Cys69–Cys109, Cys76–Cys102, Cys100–Cys133, and Cys142–Cys150. His73 is an active-site residue. Position 74 (Asp74) interacts with Ca(2+). The active site involves Asp103.

This sequence belongs to the phospholipase A2 family. Group III subfamily. It depends on Ca(2+) as a cofactor. Expressed by the venom gland.

The protein resides in the secreted. It carries out the reaction a 1,2-diacyl-sn-glycero-3-phosphocholine + H2O = a 1-acyl-sn-glycero-3-phosphocholine + a fatty acid + H(+). Functionally, may potentiate Xylotoxin(1)-Xa1a DRG activation and cell lysis, since the orthologous A.mellifera PA2 potentiates Xylotoxin(1)-Xa1a DRG activation and cell lysis. In vivo, intraplantar injection in mice may potentiate spontaneous pain behaviors and paw swelling caused by Xylotoxin(1)-Xa1a, since the orthologous A.mellifera PA2 shows this effect. PLA2 catalyzes the calcium-dependent hydrolysis of the 2-acyl groups in 3-sn-phosphoglycerides. This Xylocopa aruana (Great carpenter bee) protein is Phospholipase A2.